We begin with the raw amino-acid sequence, 323 residues long: Dihydrodiol dehydrogenase 3 (323 aa).

NADP(+) is bound by residues 20–24 and aspartate 50; that span reads GFGTF. The active-site Proton donor is tyrosine 55. A substrate-binding site is contributed by histidine 117. NADP(+) is bound by residues 166–167, glutamine 190, 216–221, and 270–280; these read SN, YGALGS, and KSYNKKRIKEN.

The protein belongs to the aldo/keto reductase family.

It is found in the cytoplasm. The polypeptide is Dihydrodiol dehydrogenase 3 (Bos taurus (Bovine)).